The primary structure comprises 122 residues: Large ribosomal subunit protein bL12 (122 aa).

The protein belongs to the bacterial ribosomal protein bL12 family. As to quaternary structure, homodimer. Part of the ribosomal stalk of the 50S ribosomal subunit. Forms a multimeric L10(L12)X complex, where L10 forms an elongated spine to which 2 to 4 L12 dimers bind in a sequential fashion. Binds GTP-bound translation factors.

Its function is as follows. Forms part of the ribosomal stalk which helps the ribosome interact with GTP-bound translation factors. Is thus essential for accurate translation. The polypeptide is Large ribosomal subunit protein bL12 (Azotobacter vinelandii (strain DJ / ATCC BAA-1303)).